Reading from the N-terminus, the 319-residue chain is Urease accessory protein UreD (319 aa).

The segment at 298-319 (QEQPLPPSSFKTNTAVPAVRTH) is disordered.

This sequence belongs to the UreD family. In terms of assembly, ureD, UreF and UreG form a complex that acts as a GTP-hydrolysis-dependent molecular chaperone, activating the urease apoprotein by helping to assemble the nickel containing metallocenter of UreC. The UreE protein probably delivers the nickel.

Its subcellular location is the cytoplasm. Its function is as follows. Required for maturation of urease via the functional incorporation of the urease nickel metallocenter. The protein is Urease accessory protein UreD of Synechococcus sp. (strain WH7805).